A 569-amino-acid chain; its full sequence is Potassium-transporting ATPase potassium-binding subunit (569 aa).

Helical transmembrane passes span 3-23 (LMEY…SPVL), 68-88 (AASL…VLML), 136-156 (VGLA…AVAV), 179-199 (VLYV…GQGV), 259-279 (LQML…GGAV), 284-304 (HAWT…CSLY), 384-404 (GLYG…LMVG), 422-442 (AMLA…VAAV), 490-510 (IALA…GVAG), and 534-554 (LLLT…ALAL).

It belongs to the KdpA family. The system is composed of three essential subunits: KdpA, KdpB and KdpC.

Its subcellular location is the cell inner membrane. Part of the high-affinity ATP-driven potassium transport (or Kdp) system, which catalyzes the hydrolysis of ATP coupled with the electrogenic transport of potassium into the cytoplasm. This subunit binds the periplasmic potassium ions and delivers the ions to the membrane domain of KdpB through an intramembrane tunnel. This chain is Potassium-transporting ATPase potassium-binding subunit, found in Nitratidesulfovibrio vulgaris (strain ATCC 29579 / DSM 644 / CCUG 34227 / NCIMB 8303 / VKM B-1760 / Hildenborough) (Desulfovibrio vulgaris).